We begin with the raw amino-acid sequence, 517 residues long: MSPLNGVARSFPRPFQAVTRRPFRVVQPAIACPSNSRSFNHSRSLRSTGSQSPAPSPRDSSNPALSFPCLDAQEAKSALLSARSLGSGPEPSYTAGHHERFHSDEPLLLDWGGLLPEFDIAYETWGQLNEKKDNVILLHTGLSASSHAHSTEANPKPGWWEKFIGPGKTLDTDKYFVICTNVLGGCYGSTGPSTVDPSDGKKYATRFPILTIEDMVRAQFRLLDHLGVRKLYASVGSSMGGMQSLAAGVLFPERVGKIVSISGCARSHPYSIAMRHTQRQVLMMDPNWARGFYYDSIPPHSGMKLAREIATVTYRSGPEWEKRFGRKRADPSKQPALCPDFLIETYLDHAGEKFCLEYDANSLLYISKAMDLFDLGLTQQLATKKQRAEAQAKISSGTNTVNDASCSLTLPEQPYQEQPSASTSAEQSASASETGSAPNDLVAGLAPLKDHQVLVIGVASDILFPAWQQREIAETLIQAGNKTVEHIELGNDVSLFGHDTFLLDVKNVGGAVRKFLD.

A mitochondrion-targeting transit peptide spans 1–46 (MSPLNGVARSFPRPFQAVTRRPFRVVQPAIACPSNSRSFNHSRSLR). The span at 36–64 (SRSFNHSRSLRSTGSQSPAPSPRDSSNPA) shows a compositional bias: polar residues. A disordered region spans residues 36–66 (SRSFNHSRSLRSTGSQSPAPSPRDSSNPALS). One can recognise an AB hydrolase-1 domain in the interval 134–386 (NVILLHTGLS…LTQQLATKKQ (253 aa)). The important for substrate specificity stretch occupies residues 141–144 (GLSA). Serine 238 acts as the Nucleophile in catalysis. Arginine 307 contributes to the substrate binding site. A disordered region spans residues 413–436 (QPYQEQPSASTSAEQSASASETGS). The segment covering 416-436 (QEQPSASTSAEQSASASETGS) has biased composition (low complexity). Active-site residues include aspartate 461 and histidine 498. Substrate is bound at residue aspartate 499.

This sequence belongs to the AB hydrolase superfamily. MetX family.

It is found in the mitochondrion. The catalysed reaction is succinyl-CoA + L-serine = O-succinyl-L-serine + CoA. It participates in amino-acid biosynthesis; L-cysteine biosynthesis; L-cysteine from L-serine: step 1/2. Transfers a succinyl group from succinyl-CoA to L-serine, forming succinyl-L-serine. Also has weak serine acetyl transferase activity and homoserine succinyl transferase activity. The protein is Serine O-succinyltransferase of Emericella nidulans (strain FGSC A4 / ATCC 38163 / CBS 112.46 / NRRL 194 / M139) (Aspergillus nidulans).